The chain runs to 279 residues: Undecaprenyl-diphosphatase (279 aa).

Transmembrane regions (helical) follow at residues 2-22, 44-64, 85-105, 113-133, 163-183, 188-208, 223-243, and 255-275; these read LIIE…TEWL, AFIE…VMLI, WQLW…AVPL, FYFM…FIWI, VLSI…AIIL, TVAA…YSGL, AQVL…LLAI, and FTIF…YSFF.

This sequence belongs to the UppP family.

It localises to the cell membrane. It catalyses the reaction di-trans,octa-cis-undecaprenyl diphosphate + H2O = di-trans,octa-cis-undecaprenyl phosphate + phosphate + H(+). Catalyzes the dephosphorylation of undecaprenyl diphosphate (UPP). Confers resistance to bacitracin. The protein is Undecaprenyl-diphosphatase of Streptococcus pyogenes serotype M28 (strain MGAS6180).